A 583-amino-acid polypeptide reads, in one-letter code: Aspartate--tRNA(Asp/Asn) ligase (583 aa).

Position 172 (Glu-172) interacts with L-aspartate. The tract at residues Gln-196–Lys-199 is aspartate. L-aspartate is bound at residue Arg-218. Residues Arg-218–Glu-220 and Gln-227 each bind ATP. Residue His-446 participates in L-aspartate binding. Glu-480 serves as a coordination point for ATP. Arg-487 serves as a coordination point for L-aspartate. Residue Gly-532 to Arg-535 coordinates ATP.

The protein belongs to the class-II aminoacyl-tRNA synthetase family. Type 1 subfamily. Homodimer.

It is found in the cytoplasm. It carries out the reaction tRNA(Asx) + L-aspartate + ATP = L-aspartyl-tRNA(Asx) + AMP + diphosphate. Aspartyl-tRNA synthetase with relaxed tRNA specificity since it is able to aspartylate not only its cognate tRNA(Asp) but also tRNA(Asn). Reaction proceeds in two steps: L-aspartate is first activated by ATP to form Asp-AMP and then transferred to the acceptor end of tRNA(Asp/Asn). The chain is Aspartate--tRNA(Asp/Asn) ligase from Streptococcus mutans serotype c (strain ATCC 700610 / UA159).